The sequence spans 34 residues: Cytochrome b6-f complex subunit 5 (34 aa).

Residues leucine 5–alanine 25 traverse the membrane as a helical segment.

It belongs to the PetG family. The 4 large subunits of the cytochrome b6-f complex are cytochrome b6, subunit IV (17 kDa polypeptide, PetD), cytochrome f and the Rieske protein, while the 4 small subunits are PetG, PetL, PetM and PetN. The complex functions as a dimer.

It localises to the plastid. Its subcellular location is the chloroplast thylakoid membrane. Its function is as follows. Component of the cytochrome b6-f complex, which mediates electron transfer between photosystem II (PSII) and photosystem I (PSI), cyclic electron flow around PSI, and state transitions. PetG is required for either the stability or assembly of the cytochrome b6-f complex. In Oltmannsiellopsis viridis (Marine flagellate), this protein is Cytochrome b6-f complex subunit 5.